A 143-amino-acid chain; its full sequence is Nucleoside diphosphate kinase (143 aa).

ATP contacts are provided by K11, F59, R87, T93, R104, and N114. Residue H117 is the Pros-phosphohistidine intermediate of the active site.

This sequence belongs to the NDK family. In terms of assembly, homotetramer. Mg(2+) is required as a cofactor.

It localises to the cytoplasm. It carries out the reaction a 2'-deoxyribonucleoside 5'-diphosphate + ATP = a 2'-deoxyribonucleoside 5'-triphosphate + ADP. The catalysed reaction is a ribonucleoside 5'-diphosphate + ATP = a ribonucleoside 5'-triphosphate + ADP. Its function is as follows. Major role in the synthesis of nucleoside triphosphates other than ATP. The ATP gamma phosphate is transferred to the NDP beta phosphate via a ping-pong mechanism, using a phosphorylated active-site intermediate. This is Nucleoside diphosphate kinase from Nitrosococcus oceani (strain ATCC 19707 / BCRC 17464 / JCM 30415 / NCIMB 11848 / C-107).